The primary structure comprises 203 residues: Dual-action ribosomal maturation protein DarP (203 aa).

Over residues 1–13 (MQPMTRNSRNSPG) the composition is skewed to polar residues. Positions 1–39 (MQPMTRNSRNSPGSRFPGAFAPEPDMDEPKSKSQKKRDM) are disordered. Positions 27 to 39 (DEPKSKSQKKRDM) are enriched in basic and acidic residues.

It belongs to the DarP family.

Its subcellular location is the cytoplasm. Member of a network of 50S ribosomal subunit biogenesis factors which assembles along the 30S-50S interface, preventing incorrect 23S rRNA structures from forming. Promotes peptidyl transferase center (PTC) maturation. The chain is Dual-action ribosomal maturation protein DarP from Cupriavidus pinatubonensis (strain JMP 134 / LMG 1197) (Cupriavidus necator (strain JMP 134)).